The following is a 664-amino-acid chain: UvrABC system protein B (664 aa).

In terms of domain architecture, Helicase ATP-binding spans 25-170 (NSILLGNKYQ…FVGQRISIKE (146 aa)). 38–45 (GVTGSGKT) provides a ligand contact to ATP. The Beta-hairpin signature appears at 91-114 (YYDYYQPESYVPSKDLFIEKEATI). Residues 429-595 (QMEDLYIEIQ…TIVKKIQNIL (167 aa)) enclose the Helicase C-terminal domain. Residues 622-657 (KKLIDKLKFELEEAVNDERFEDAIVLRDKIKELGSK) form the UVR domain.

It belongs to the UvrB family. In terms of assembly, forms a heterotetramer with UvrA during the search for lesions. Interacts with UvrC in an incision complex.

It localises to the cytoplasm. Its function is as follows. The UvrABC repair system catalyzes the recognition and processing of DNA lesions. A damage recognition complex composed of 2 UvrA and 2 UvrB subunits scans DNA for abnormalities. Upon binding of the UvrA(2)B(2) complex to a putative damaged site, the DNA wraps around one UvrB monomer. DNA wrap is dependent on ATP binding by UvrB and probably causes local melting of the DNA helix, facilitating insertion of UvrB beta-hairpin between the DNA strands. Then UvrB probes one DNA strand for the presence of a lesion. If a lesion is found the UvrA subunits dissociate and the UvrB-DNA preincision complex is formed. This complex is subsequently bound by UvrC and the second UvrB is released. If no lesion is found, the DNA wraps around the other UvrB subunit that will check the other stand for damage. The chain is UvrABC system protein B from Borreliella afzelii (strain PKo) (Borrelia afzelii).